Reading from the N-terminus, the 1458-residue chain is ABC multidrug transporter B (1458 aa).

5 consecutive transmembrane segments (helical) span residues 30–50, 70–90, 102–122, 128–148, and 165–185; these read FSLL…VLII, LLWA…VLAV, ASIA…LLSC, STTP…FDIA, and IAIL…LEAV. A glycan (N-linked (GlcNAc...) asparagine) is linked at asparagine 208. Residues 273-295 traverse the membrane as a helical segment; sequence WPLLSAVPPRACLAALNFCQPLL. Residues 283–561 form the ABC transmembrane type-1 1 domain; the sequence is ACLAALNFCQ…LVMALMTFVG (279 aa). Residue asparagine 309 is glycosylated (N-linked (GlcNAc...) asparagine). 5 helical membrane-spanning segments follow: residues 314-334, 387-407, 411-431, 501-521, and 541-561; these read IGYG…VTMG, WQTI…IYLL, LGVA…GCLI, LGWT…YGIM, and LFAL…TFVG. The ABC transporter 1 domain maps to 626 to 853; the sequence is LTVKNATFAW…AGGYVSSFGL (228 aa). N-linked (GlcNAc...) asparagine glycosylation is present at asparagine 630. An ATP-binding site is contributed by 660–667; that stretch reads GPSGCGKS. N-linked (GlcNAc...) asparagine glycans are attached at residues asparagine 702, asparagine 804, and asparagine 879. Positions 933 to 1182 constitute an ABC transmembrane type-1 2 domain; that stretch reads PNGRTGYYLG…LVTFWTNLET (250 aa). Transmembrane regions (helical) follow at residues 940 to 960, 978 to 998, 1016 to 1036, 1040 to 1060, 1125 to 1145, and 1156 to 1176; these read YLGI…IGCW, LLAT…SGSI, AAIN…LMGI, YAAI…KVYL, LTLT…VLVV, and VGVA…LVTF. Residues 1219–1449 form the ABC transporter 2 domain; sequence IEFKSVSAEY…EGSYFSRLYA (231 aa). Position 1252–1259 (1252–1259) interacts with ATP; that stretch reads GRTGSGKT. N-linked (GlcNAc...) asparagine glycosylation is present at asparagine 1316.

This sequence belongs to the ABC transporter superfamily. ABCC family. Conjugate transporter (TC 3.A.1.208) subfamily.

It is found in the cell membrane. Pleiotropic ABC efflux transporter that may be involved in A.fumigatus adaptation to azoles such as vorizonazole. The chain is ABC multidrug transporter B from Aspergillus fumigatus (strain ATCC MYA-4609 / CBS 101355 / FGSC A1100 / Af293) (Neosartorya fumigata).